A 231-amino-acid chain; its full sequence is UPF0758 protein RBAM_025090 (231 aa).

Residues 109-231 enclose the MPN domain; that stretch reads VIRSPEDGAK…FVSLKEKGYL (123 aa). Zn(2+) is bound by residues His180, His182, and Asp193. The JAMM motif signature appears at 180–193; it reads HNHPSGDPTPSRED.

The protein belongs to the UPF0758 family.

The sequence is that of UPF0758 protein RBAM_025090 from Bacillus velezensis (strain DSM 23117 / BGSC 10A6 / LMG 26770 / FZB42) (Bacillus amyloliquefaciens subsp. plantarum).